The following is a 549-amino-acid chain: Arginine--tRNA ligase (549 aa).

Residues 132 to 142 carry the 'HIGH' region motif; the sequence is ANPTGPLHLAH.

It belongs to the class-I aminoacyl-tRNA synthetase family. Monomer.

It localises to the cytoplasm. The catalysed reaction is tRNA(Arg) + L-arginine + ATP = L-arginyl-tRNA(Arg) + AMP + diphosphate. The polypeptide is Arginine--tRNA ligase (Renibacterium salmoninarum (strain ATCC 33209 / DSM 20767 / JCM 11484 / NBRC 15589 / NCIMB 2235)).